The primary structure comprises 906 residues: Kinesin-like protein KIN-7G (906 aa).

The Kinesin motor domain maps to S26–I344. G105 to T112 lines the ATP pocket. Coiled-coil stretches lie at residues I346–T385, S733–Q814, and G839–E875. The tract at residues R803 to D840 is disordered. Basic residues predominate over residues N813–G823. Positions A824–D840 are enriched in basic and acidic residues.

Belongs to the TRAFAC class myosin-kinesin ATPase superfamily. Kinesin family. KIN-7 subfamily.

In Oryza sativa subsp. japonica (Rice), this protein is Kinesin-like protein KIN-7G.